Consider the following 214-residue polypeptide: Phosphatidylcholine transfer protein (214 aa).

N-acetylmethionine is present on Met1. Positions 1-212 (MAGPAAHFSD…MVKACQNYHK (212 aa)) constitute an START domain. 2 residues coordinate a 1,2-diacyl-sn-glycero-3-phosphocholine: Tyr72 and Arg78. Position 139 is a phosphoserine (Ser139). Gln157 provides a ligand contact to a 1,2-diacyl-sn-glycero-3-phosphocholine.

In terms of assembly, interacts with ACOT13/THEM2.

The protein localises to the cytoplasm. In terms of biological role, lipid transfer protein that promotes intermembrane transfer of phosphatidylcholines but no other phospholipids. Binds a single lipid molecule. May play a role in hepatocellular selection and transport of phosphatidylcholines during bile formation. This Rattus norvegicus (Rat) protein is Phosphatidylcholine transfer protein (Pctp).